Consider the following 556-residue polypeptide: 2-succinyl-5-enolpyruvyl-6-hydroxy-3-cyclohexene-1-carboxylate synthase (556 aa).

This sequence belongs to the TPP enzyme family. MenD subfamily. As to quaternary structure, homodimer. Mg(2+) is required as a cofactor. It depends on Mn(2+) as a cofactor. Thiamine diphosphate serves as cofactor.

It catalyses the reaction isochorismate + 2-oxoglutarate + H(+) = 5-enolpyruvoyl-6-hydroxy-2-succinyl-cyclohex-3-ene-1-carboxylate + CO2. It participates in quinol/quinone metabolism; 1,4-dihydroxy-2-naphthoate biosynthesis; 1,4-dihydroxy-2-naphthoate from chorismate: step 2/7. The protein operates within quinol/quinone metabolism; menaquinone biosynthesis. In terms of biological role, catalyzes the thiamine diphosphate-dependent decarboxylation of 2-oxoglutarate and the subsequent addition of the resulting succinic semialdehyde-thiamine pyrophosphate anion to isochorismate to yield 2-succinyl-5-enolpyruvyl-6-hydroxy-3-cyclohexene-1-carboxylate (SEPHCHC). This chain is 2-succinyl-5-enolpyruvyl-6-hydroxy-3-cyclohexene-1-carboxylate synthase, found in Shigella boydii serotype 4 (strain Sb227).